Consider the following 465-residue polypeptide: Lysosomal dipeptide transporter MFSD1 (465 aa).

Residues 1-23 (MEEEDEEARALLAGGPDEADRGA) form a disordered region. Positions 11 to 12 (LL) match the Dileucine internalization motif motif. 12 helical membrane passes run 39–59 (LAHR…SYFC), 83–103 (LLYA…GFLI), 113–133 (TIIF…GGIF), 135–155 (AFWL…SLAV), 170–191 (LNLV…NMNL), 213–233 (ITLM…LALA), 266–286 (LWLI…FIGL), 303–323 (SAIN…FGLL), 331–351 (IIWV…LAFT), 361–381 (LLGL…AFVV), 392–412 (FMQS…GMIL), and 418–438 (LFLE…VVLL).

It belongs to the major facilitator superfamily. Homodimer. Interacts with lysosomal protein GLMP (via lumenal domain); the interaction starts while both proteins are still in the endoplasmic reticulum and is required for stabilization of MFSD1 in lysosomes but has no direct effect on its targeting to lysosomes or transporter activity.

It localises to the lysosome membrane. The catalysed reaction is L-alpha-aminoacyl-L-arginine(out) = L-alpha-aminoacyl-L-arginine(in). It catalyses the reaction L-arginyl-L-alpha-amino acid(out) = L-arginyl-L-alpha-amino acid(in). The enzyme catalyses L-arginyl-glycine(out) = L-arginyl-glycine(in). It carries out the reaction L-alpha-aminoacyl-L-lysine(out) = L-alpha-aminoacyl-L-lysine(in). The catalysed reaction is L-aspartyl-L-lysine(out) = L-aspartyl-L-lysine(in). It catalyses the reaction L-alanyl-L-lysine(out) = L-alanyl-L-lysine(in). The enzyme catalyses L-lysyl-L-alpha-amino acid(out) = L-lysyl-L-alpha-amino acid(in). It carries out the reaction L-lysyl-L-alanine(out) = L-lysyl-L-alanine(in). The catalysed reaction is L-lysyl-L-lysine(out) = L-lysyl-L-lysine(in). It catalyses the reaction L-lysyl-glycine(out) = L-lysyl-glycine(in). The enzyme catalyses L-alpha-aminoacyl-L-histidine(out) = L-alpha-aminoacyl-L-histidine(in). It carries out the reaction L-histidyl-L-alpha-amino acid(out) = L-histidyl-L-alpha-amino acid(in). The catalysed reaction is L-histidyl-glycine(out) = L-histidyl-glycine(in). Functionally, lysosomal dipeptide uniporter that selectively exports lysine, arginine or histidine-containing dipeptides with a net positive charge from the lysosome lumen into the cytosol. Could play a role in a specific type of protein O-glycosylation indirectly regulating macrophages migration and tissue invasion. Also essential for liver homeostasis. The protein is Lysosomal dipeptide transporter MFSD1 of Homo sapiens (Human).